The primary structure comprises 162 residues: UPF0305 protein MmarC5_0909 (162 aa).

Belongs to the UPF0305 family.

This chain is UPF0305 protein MmarC5_0909, found in Methanococcus maripaludis (strain C5 / ATCC BAA-1333).